Reading from the N-terminus, the 478-residue chain is Oxidative stress-induced growth inhibitor 1 (478 aa).

A Phosphoserine modification is found at S12.

This sequence belongs to the OKL38 family. NADPH is required as a cofactor.

The protein localises to the midbody. Functionally, monooxygenase catalytic activity. Involved in regulation of cytokinesis; promotes RHOA activity, probably acting locally at the midbody in late cytokinesis. Monooxygenase activity is involved in stabilizing transient structures between daughter cells, termed intercellular bridges, before abscission. Regulates differentiation and proliferation through the regulation of cell death. In Mus musculus (Mouse), this protein is Oxidative stress-induced growth inhibitor 1.